Consider the following 123-residue polypeptide: Small ribosomal subunit protein uS12 (123 aa).

The interval 1 to 29 (MPTINQLIRKKRQSSASRKKSPALQKCPQ) is disordered. The segment covering 8-21 (IRKKRQSSASRKKS) has biased composition (basic residues). Asp89 carries the post-translational modification 3-methylthioaspartic acid.

It belongs to the universal ribosomal protein uS12 family. As to quaternary structure, part of the 30S ribosomal subunit. Contacts proteins S8 and S17. May interact with IF1 in the 30S initiation complex.

Functionally, with S4 and S5 plays an important role in translational accuracy. Its function is as follows. Interacts with and stabilizes bases of the 16S rRNA that are involved in tRNA selection in the A site and with the mRNA backbone. Located at the interface of the 30S and 50S subunits, it traverses the body of the 30S subunit contacting proteins on the other side and probably holding the rRNA structure together. The combined cluster of proteins S8, S12 and S17 appears to hold together the shoulder and platform of the 30S subunit. This Chlamydia abortus (strain DSM 27085 / S26/3) (Chlamydophila abortus) protein is Small ribosomal subunit protein uS12.